The primary structure comprises 153 residues: Endoribonuclease YbeY (153 aa).

Zn(2+)-binding residues include His114, His118, and His124.

This sequence belongs to the endoribonuclease YbeY family. It depends on Zn(2+) as a cofactor.

The protein resides in the cytoplasm. Its function is as follows. Single strand-specific metallo-endoribonuclease involved in late-stage 70S ribosome quality control and in maturation of the 3' terminus of the 16S rRNA. The chain is Endoribonuclease YbeY from Shewanella denitrificans (strain OS217 / ATCC BAA-1090 / DSM 15013).